A 113-amino-acid polypeptide reads, in one-letter code: Hydrogenase maturation factor HypA (113 aa).

His-2 provides a ligand contact to Ni(2+). Cys-73, Cys-76, Cys-89, and Cys-92 together coordinate Zn(2+).

It belongs to the HypA/HybF family.

Involved in the maturation of [NiFe] hydrogenases. Required for nickel insertion into the metal center of the hydrogenase. This Methylocella silvestris (strain DSM 15510 / CIP 108128 / LMG 27833 / NCIMB 13906 / BL2) protein is Hydrogenase maturation factor HypA.